The sequence spans 250 residues: ATP synthase subunit a (250 aa).

Helical transmembrane passes span 25–45 (VSFT…FFFL), 84–104 (VFFP…VIGL), 115–135 (IVVT…YGFY), 141–161 (FLHL…IVLI), 187–209 (ALKV…WLGA), and 223–243 (ELLV…IYLN).

This sequence belongs to the ATPase A chain family. F-type ATPases have 2 components, CF(1) - the catalytic core - and CF(0) - the membrane proton channel. CF(1) has five subunits: alpha(3), beta(3), gamma(1), delta(1), epsilon(1). CF(0) has three main subunits: a(1), b(2) and c(9-12). The alpha and beta chains form an alternating ring which encloses part of the gamma chain. CF(1) is attached to CF(0) by a central stalk formed by the gamma and epsilon chains, while a peripheral stalk is formed by the delta and b chains.

Its subcellular location is the cell inner membrane. Functionally, key component of the proton channel; it plays a direct role in the translocation of protons across the membrane. The protein is ATP synthase subunit a of Azorhizobium caulinodans (strain ATCC 43989 / DSM 5975 / JCM 20966 / LMG 6465 / NBRC 14845 / NCIMB 13405 / ORS 571).